A 376-amino-acid polypeptide reads, in one-letter code: Zinc transporter 7 (376 aa).

The Cytoplasmic portion of the chain corresponds to 1–37 (MLPLSIKDDEYKPPKFNLFGKISGWFRSILSDKTSRN). A helical transmembrane segment spans residues 38–58 (LFFFLCLNLSFAFVELLYGIW). At 59-67 (SNCLGLISD) the chain is on the lumenal side. The helical transmembrane segment at 68–88 (SFHMFFDSTAILAGLAASVIS) threads the bilayer. Topologically, residues 89–102 (KWRDNDAFSYGYVR) are cytoplasmic. The helical transmembrane segment at 103 to 123 (AEVLAGFVNGLFLIFTAFFIF) threads the bilayer. Topologically, residues 124 to 140 (SEGVERALAPPDVHHER) are lumenal. Residues 141–161 (LLLVSILGFVVNLIGIFVFKH) form a helical membrane-spanning segment. The tract at residues 161–218 (HGGHGHSHGSGHGHSHSLFNGALDQAHGHVDHCHSHEVKHGAAHSHDHAHGHGHFHSH) is his-rich loop. The Cytoplasmic portion of the chain corresponds to 162 to 236 (GGHGHSHGSG…TGPSRQILQG (75 aa)). Residues 194-222 (HSHEVKHGAAHSHDHAHGHGHFHSHDGPS) show a composition bias toward basic and acidic residues. A disordered region spans residues 194-226 (HSHEVKHGAAHSHDHAHGHGHFHSHDGPSLKET). The chain crosses the membrane as a helical span at residues 237-257 (VFLHILADTLGSIGVIASAIM). Over 258 to 262 (MQNFG) the chain is Lumenal. A helical membrane pass occupies residues 263-283 (LMIADPICSILIAILIVVSVI). Over 284–376 (PLLRESVGIL…LYVQIDFAAM (93 aa)) the chain is Cytoplasmic.

Belongs to the cation diffusion facilitator (CDF) transporter (TC 2.A.4) family. SLC30A subfamily. In terms of assembly, homooligomer. In terms of tissue distribution, highly expressed in megakaryocytes and other bone marrow cells and in the epithelium of the small intestine. Expressed in testis (in Leydig cells), adrenal gland (in adrenal medula, zona fasciculata and zona of reticularis), and pituitary gland (in somatotropic cells).

It localises to the golgi apparatus membrane. The protein resides in the cytoplasmic vesicle. The protein localises to the golgi apparatus. Its subcellular location is the trans-Golgi network. It is found in the sarcoplasmic reticulum. It localises to the mitochondrion. It catalyses the reaction Zn(2+)(in) = Zn(2+)(out). In terms of biological role, zinc ion transporter mediating zinc entry from the cytosol into the lumen of organelles along the secretory pathway. By contributing to zinc ion homeostasis within the early secretory pathway, regulates the activation and folding of enzymes like alkaline phosphatases. The sequence is that of Zinc transporter 7 from Homo sapiens (Human).